The following is a 196-amino-acid chain: dTTP/UTP pyrophosphatase (196 aa).

Asp72 acts as the Proton acceptor in catalysis.

This sequence belongs to the Maf family. YhdE subfamily. It depends on a divalent metal cation as a cofactor.

It is found in the cytoplasm. It catalyses the reaction dTTP + H2O = dTMP + diphosphate + H(+). The catalysed reaction is UTP + H2O = UMP + diphosphate + H(+). Functionally, nucleoside triphosphate pyrophosphatase that hydrolyzes dTTP and UTP. May have a dual role in cell division arrest and in preventing the incorporation of modified nucleotides into cellular nucleic acids. This chain is dTTP/UTP pyrophosphatase, found in Chlamydia felis (strain Fe/C-56) (Chlamydophila felis).